Here is a 497-residue protein sequence, read N- to C-terminus: Angiopoietin-1 (497 aa).

The first 15 residues, 1–15 (MTVFLSFAFLAAILT), serve as a signal peptide directing secretion. Asn-92, Asn-122, Asn-154, Asn-243, and Asn-294 each carry an N-linked (GlcNAc...) asparagine glycan. Residues 153–261 (LNQTSRLEIQ…LELMDTVHNL (109 aa)) adopt a coiled-coil conformation. Residues 276 to 496 (KEEEKPFRDC…STTMMIRPLD (221 aa)) enclose the Fibrinogen C-terminal domain. Disulfide bonds link Cys-285–Cys-314 and Cys-438–Cys-451.

Homooligomer. Interacts with TEK/TIE2. Interacts with SVEP1/polydom. Interacts with THBD; this interaction significantly inhibits the generation of activated PC and TAFIa/CPB2 by the thrombin/thrombomodulin complex.

It localises to the secreted. Its function is as follows. Binds and activates TIE2 receptor by inducing its tyrosine phosphorylation. Implicated in endothelial developmental processes later and distinct from that of VEGF. Appears to play a crucial role in mediating reciprocal interactions between the endothelium and surrounding matrix and mesenchyme. Mediates blood vessel maturation/stability. It may play an important role in the heart early development. The polypeptide is Angiopoietin-1 (ANGPT1) (Bos taurus (Bovine)).